Consider the following 282-residue polypeptide: Bifunctional protein FolD (282 aa).

Residues 166-168 and Ile232 each bind NADP(+); that span reads GAS.

This sequence belongs to the tetrahydrofolate dehydrogenase/cyclohydrolase family. Homodimer.

The enzyme catalyses (6R)-5,10-methylene-5,6,7,8-tetrahydrofolate + NADP(+) = (6R)-5,10-methenyltetrahydrofolate + NADPH. The catalysed reaction is (6R)-5,10-methenyltetrahydrofolate + H2O = (6R)-10-formyltetrahydrofolate + H(+). It functions in the pathway one-carbon metabolism; tetrahydrofolate interconversion. Catalyzes the oxidation of 5,10-methylenetetrahydrofolate to 5,10-methenyltetrahydrofolate and then the hydrolysis of 5,10-methenyltetrahydrofolate to 10-formyltetrahydrofolate. This is Bifunctional protein FolD from Haemophilus influenzae (strain PittGG).